The primary structure comprises 467 residues: Fumarate hydratase class II (467 aa).

Substrate-binding positions include 98-100, Arg-126, 129-132, 139-141, and Thr-187; these read SGT, HPND, and SSN. Residue His-188 is the Proton donor/acceptor of the active site. Ser-318 is a catalytic residue. Substrate contacts are provided by residues Ser-319 and 324–326; that span reads KVN.

Belongs to the class-II fumarase/aspartase family. Fumarase subfamily. Homotetramer.

Its subcellular location is the cytoplasm. It catalyses the reaction (S)-malate = fumarate + H2O. It participates in carbohydrate metabolism; tricarboxylic acid cycle; (S)-malate from fumarate: step 1/1. Its activity is regulated as follows. Inhibited by ATP, citrate and S-2,3-dicarboxyaziridine. Its function is as follows. Involved in the TCA cycle. FumC seems to be a backup enzyme for FumA under conditions of iron limitation and oxidative stress. Catalyzes the stereospecific interconversion of fumarate to L-malate. In Escherichia coli (strain K12), this protein is Fumarate hydratase class II.